A 188-amino-acid chain; its full sequence is Small ribosomal subunit protein uS7 (188 aa).

The protein belongs to the universal ribosomal protein uS7 family. As to quaternary structure, part of the 30S ribosomal subunit.

Its function is as follows. One of the primary rRNA binding proteins, it binds directly to 16S rRNA where it nucleates assembly of the head domain of the 30S subunit. Is located at the subunit interface close to the decoding center. In Methanococcus maripaludis (strain DSM 14266 / JCM 13030 / NBRC 101832 / S2 / LL), this protein is Small ribosomal subunit protein uS7.